The chain runs to 261 residues: Type III pantothenate kinase (261 aa).

Residue 6–13 (DAGNSNIT) coordinates ATP. Substrate-binding positions include Y100 and 107-110 (GADR). D109 acts as the Proton acceptor in catalysis. D129 serves as a coordination point for K(+). T132 contributes to the ATP binding site. A substrate-binding site is contributed by T184.

The protein belongs to the type III pantothenate kinase family. In terms of assembly, homodimer. NH4(+) is required as a cofactor. It depends on K(+) as a cofactor.

It is found in the cytoplasm. The enzyme catalyses (R)-pantothenate + ATP = (R)-4'-phosphopantothenate + ADP + H(+). The protein operates within cofactor biosynthesis; coenzyme A biosynthesis; CoA from (R)-pantothenate: step 1/5. Functionally, catalyzes the phosphorylation of pantothenate (Pan), the first step in CoA biosynthesis. This is Type III pantothenate kinase from Solibacter usitatus (strain Ellin6076).